Here is a 162-residue protein sequence, read N- to C-terminus: Nitrogen regulatory protein (162 aa).

In terms of domain architecture, PTS EIIA type-2 spans 12-156; the sequence is NVLNQECTRS…EELYEIITEA (145 aa). H73 acts as the Tele-phosphohistidine intermediate in catalysis.

Its subcellular location is the cytoplasm. In terms of biological role, seems to have a role in regulating nitrogen assimilation. The protein is Nitrogen regulatory protein (ptsN) of Klebsiella oxytoca.